The following is a 237-amino-acid chain: 6-carboxyhexanoate--CoA ligase (237 aa).

It belongs to the BioW family. Homodimer. It depends on Mg(2+) as a cofactor.

It catalyses the reaction heptanedioate + ATP + CoA = 6-carboxyhexanoyl-CoA + AMP + diphosphate. It functions in the pathway metabolic intermediate metabolism; pimeloyl-CoA biosynthesis; pimeloyl-CoA from pimelate: step 1/1. Its function is as follows. Catalyzes the transformation of pimelate into pimeloyl-CoA with concomitant hydrolysis of ATP to AMP. The protein is 6-carboxyhexanoate--CoA ligase of Methanocaldococcus jannaschii (strain ATCC 43067 / DSM 2661 / JAL-1 / JCM 10045 / NBRC 100440) (Methanococcus jannaschii).